Here is a 168-residue protein sequence, read N- to C-terminus: Plastocyanin B, chloroplastic (168 aa).

A chloroplast-targeting transit peptide spans 1 to 69 (MAAVTSAAVS…SAMIASNAMA (69 aa)). Positions 70–168 (VDVLLGADDG…AGMVGKVIVN (99 aa)) constitute a Plastocyanin-like domain. Residues His106, Cys153, His156, and Met161 each coordinate Cu cation.

Belongs to the plastocyanin family. Cu(2+) serves as cofactor.

Its subcellular location is the plastid. It is found in the chloroplast thylakoid membrane. Functionally, participates in electron transfer between P700 and the cytochrome b6-f complex in photosystem I. The protein is Plastocyanin B, chloroplastic (PETE) of Populus nigra (Lombardy poplar).